The sequence spans 272 residues: 2-dehydro-3-deoxyphosphooctonate aldolase (272 aa).

Belongs to the KdsA family.

Its subcellular location is the cytoplasm. The catalysed reaction is D-arabinose 5-phosphate + phosphoenolpyruvate + H2O = 3-deoxy-alpha-D-manno-2-octulosonate-8-phosphate + phosphate. It participates in carbohydrate biosynthesis; 3-deoxy-D-manno-octulosonate biosynthesis; 3-deoxy-D-manno-octulosonate from D-ribulose 5-phosphate: step 2/3. It functions in the pathway bacterial outer membrane biogenesis; lipopolysaccharide biosynthesis. The chain is 2-dehydro-3-deoxyphosphooctonate aldolase from Trichlorobacter lovleyi (strain ATCC BAA-1151 / DSM 17278 / SZ) (Geobacter lovleyi).